Consider the following 119-residue polypeptide: uncharacterized protein (119 aa).

This is an uncharacterized protein from Bos taurus (Bovine).